The sequence spans 40 residues: Large ribosomal subunit protein bL36 (40 aa).

This sequence belongs to the bacterial ribosomal protein bL36 family.

This Coxiella burnetii (strain Dugway 5J108-111) protein is Large ribosomal subunit protein bL36.